A 368-amino-acid polypeptide reads, in one-letter code: uncharacterized protein (368 aa).

Residues Met-1–Ala-19 form the signal peptide. N-linked (GlcNAc...) asparagine; by host glycans are attached at residues Asn-99, Asn-170, Asn-266, and Asn-295.

This is an uncharacterized protein from Ostreid herpesvirus 1 (isolate France) (OsHV-1).